Here is a 265-residue protein sequence, read N- to C-terminus: MNNAFKDALKAGRPQIGLWLGLCSSYSAELLAGAGFDWLLIDGEHAPNNVPTVLTQLQAIAPYPSQPVVRPSWNDPVQIKQLLDVGAQTLLVPMVQNAEEARLAVRATRYPPAGIRGVGSALARASRWNRVPDYIHQANDAMCVLVQIETREALKNLPQILDVDGVDGVFIGPADLSADMGHGGNPQHPEVQAAIEDAIQQIRQAGKAPGILMANEQLAKRYLELGALFVAVGVDTTLLARGAEALAARFTHNATTTTDNNKSVY.

The active-site Proton acceptor is the histidine 45. A substrate-binding site is contributed by glutamine 147. Glutamate 149 contacts a divalent metal cation. Residues alanine 174 and aspartate 175 each coordinate substrate. An a divalent metal cation-binding site is contributed by aspartate 175.

The protein belongs to the HpcH/HpaI aldolase family. In terms of assembly, homohexamer; trimer of dimers. Requires a divalent metal cation as cofactor.

The enzyme catalyses 4-hydroxy-2-oxoheptanedioate = succinate semialdehyde + pyruvate. Its pathway is aromatic compound metabolism; 4-hydroxyphenylacetate degradation; pyruvate and succinate semialdehyde from 4-hydroxyphenylacetate: step 7/7. Functionally, catalyzes the reversible retro-aldol cleavage of 4-hydroxy-2-ketoheptane-1,7-dioate (HKHD) to pyruvate and succinic semialdehyde. In Klebsiella pneumoniae subsp. pneumoniae (strain ATCC 700721 / MGH 78578), this protein is 4-hydroxy-2-oxo-heptane-1,7-dioate aldolase.